Reading from the N-terminus, the 85-residue chain is Large ribosomal subunit protein bL27 (85 aa).

A disordered region spans residues 1–22; that stretch reads MAHKKAGGSTRNGRDSESKRLG.

This sequence belongs to the bacterial ribosomal protein bL27 family.

The polypeptide is Large ribosomal subunit protein bL27 (Teredinibacter turnerae (strain ATCC 39867 / T7901)).